The sequence spans 478 residues: Dihydrolipoyl dehydrogenase (478 aa).

Residues 34–49 (EKYI…GGTC), lysine 58, and glycine 122 each bind FAD. Residues cysteine 49 and cysteine 54 are joined by a disulfide bond. Residues 188-192 (GAGVI), glutamate 211, valine 245, and 276-279 (AVGR) contribute to the NAD(+) site. FAD-binding residues include aspartate 319 and alanine 327. Catalysis depends on histidine 451, which acts as the Proton acceptor.

This sequence belongs to the class-I pyridine nucleotide-disulfide oxidoreductase family. As to quaternary structure, homodimer. FAD serves as cofactor.

The protein resides in the cytoplasm. It carries out the reaction N(6)-[(R)-dihydrolipoyl]-L-lysyl-[protein] + NAD(+) = N(6)-[(R)-lipoyl]-L-lysyl-[protein] + NADH + H(+). The branched-chain alpha-keto dehydrogenase complex catalyzes the overall conversion of alpha-keto acids to acyl-CoA and CO(2). It contains multiple copies of 3 enzymatic components: branched-chain alpha-keto acid decarboxylase (E1), lipoamide acyltransferase (E2) and lipoamide dehydrogenase (E3). In terms of biological role, also acts in the glycine cleavage system. The chain is Dihydrolipoyl dehydrogenase (lpdG) from Pseudomonas aeruginosa (strain ATCC 15692 / DSM 22644 / CIP 104116 / JCM 14847 / LMG 12228 / 1C / PRS 101 / PAO1).